A 121-amino-acid polypeptide reads, in one-letter code: Large ribosomal subunit protein bL12 (121 aa).

The protein belongs to the bacterial ribosomal protein bL12 family. Homodimer. Part of the ribosomal stalk of the 50S ribosomal subunit. Forms a multimeric L10(L12)X complex, where L10 forms an elongated spine to which 2 to 4 L12 dimers bind in a sequential fashion. Binds GTP-bound translation factors.

In terms of biological role, forms part of the ribosomal stalk which helps the ribosome interact with GTP-bound translation factors. Is thus essential for accurate translation. The chain is Large ribosomal subunit protein bL12 from Pseudomonas fluorescens (strain ATCC BAA-477 / NRRL B-23932 / Pf-5).